The sequence spans 468 residues: Citrate synthase, mitochondrial (468 aa).

The transit peptide at 1-30 directs the protein to the mitochondrion; it reads MSLITAGRLCARILGAKNSPCALIAARQAS. Catalysis depends on residues His303 and His349. An oxaloacetate-binding site is contributed by Arg358. Residue Asp404 is part of the active site. Oxaloacetate-binding residues include Arg430 and Arg450.

It belongs to the citrate synthase family. As to quaternary structure, homodimer.

It is found in the mitochondrion matrix. The catalysed reaction is oxaloacetate + acetyl-CoA + H2O = citrate + CoA + H(+). It functions in the pathway carbohydrate metabolism; tricarboxylic acid cycle; isocitrate from oxaloacetate: step 1/2. Functionally, key enzyme of the Krebs tricarboxylic acid cycle which catalyzes the synthesis of citrate from acetyl coenzyme A and oxaloacetate. The protein is Citrate synthase, mitochondrial (cs) of Xenopus tropicalis (Western clawed frog).